Here is a 332-residue protein sequence, read N- to C-terminus: 2,3-diketo-L-gulonate reductase (332 aa).

His-44 acts as the Proton donor in catalysis. NAD(+)-binding positions include 168–174 (ITMVDMS), 224–225 (WK), and 304–306 (GHE).

The protein belongs to the LDH2/MDH2 oxidoreductase family. DlgD subfamily. As to quaternary structure, homodimer.

It is found in the cytoplasm. The catalysed reaction is 3-dehydro-L-gulonate + NAD(+) = 2,3-dioxo-L-gulonate + NADH + H(+). The enzyme catalyses 3-dehydro-L-gulonate + NADP(+) = 2,3-dioxo-L-gulonate + NADPH + H(+). Its function is as follows. Catalyzes the reduction of 2,3-diketo-L-gulonate in the presence of NADH, to form 3-keto-L-gulonate. The sequence is that of 2,3-diketo-L-gulonate reductase from Salmonella paratyphi A (strain ATCC 9150 / SARB42).